Consider the following 353-residue polypeptide: ATP-dependent kinase YFH7 (353 aa).

31–39 (GSPGSGKST) provides a ligand contact to ATP.

Belongs to the YFH7 family.

ATP-dependent kinase that could be involved in endoplasmic reticulum membrane assembly. In Saccharomyces cerevisiae (strain Lalvin EC1118 / Prise de mousse) (Baker's yeast), this protein is ATP-dependent kinase YFH7 (YFH7).